The chain runs to 561 residues: Carboxylesterase patB (561 aa).

Positions M1–A19 are cleaved as a signal peptide. N-linked (GlcNAc...) asparagine glycosylation is found at N38, N69, and N109. The active-site Acyl-ester intermediate is S263. Residue S263 participates in substrate binding. An N-linked (GlcNAc...) asparagine glycan is attached at N316. The active-site Charge relay system is the E385. 4 N-linked (GlcNAc...) asparagine glycosylation sites follow: N393, N412, N429, and N496.

The protein belongs to the type-B carboxylesterase/lipase family.

It is found in the cytoplasm. It localises to the cytosol. The catalysed reaction is a carboxylic ester + H2O = an alcohol + a carboxylate + H(+). It participates in mycotoxin biosynthesis; patulin biosynthesis. In terms of biological role, carboxylesterase; part of the gene cluster that mediates the biosynthesis of patulin, an acetate-derived tetraketide mycotoxin produced by several fungal species that shows antimicrobial properties against several bacteria. The function of patB in patulin synthesis has still to be characterized. The pathway begins with the synthesis of 6-methylsalicylic acid by the polyketide synthase (PKS) patK via condensation of acetate and malonate units. The 6-methylsalicylic acid decarboxylase patG then catalyzes the decarboxylation of 6-methylsalicylic acid to yield m-cresol (also known as 3-methylphenol). These first reactions occur in the cytosol. The intermediate m-cresol is then transported into the endoplasmic reticulum where the cytochrome P450 monooxygenase patH converts it to m-hydroxybenzyl alcohol, which is further converted to gentisyl alcohol by the cytochrome P450 monooxygenase patI. The oxidoreductases patJ and patO further convert gentisyl alcohol to isoepoxydon in the vacuole. PatN catalyzes then the transformation of isoepoxydon into phyllostine. The cluster protein patF is responsible for the conversion from phyllostine to neopatulin whereas the alcohol dehydrogenase patD converts neopatulin to E-ascladiol. The steps between isoepoxydon and E-ascladiol occur in the cytosol, and E-ascladiol is probably secreted to the extracellular space by one of the cluster-specific transporters patC or patM. Finally, the secreted patulin synthase patE catalyzes the conversion of E-ascladiol to patulin. The sequence is that of Carboxylesterase patB from Penicillium expansum (Blue mold rot fungus).